The chain runs to 446 residues: SWI/SNF chromatin-remodeling accessory subunit 1 (446 aa).

The segment at 1–53 is disordered; it reads MQTQARPPVPQGPRFNHPATPQQVRRPINAPLPGQTAQIQGNRGPQPPKKKKR. The SWIB/MDM2 domain occupies 220 to 297; that stretch reads YQPMKFKLHP…PQRLHQLLQQ (78 aa).

It belongs to the SMARCD family. Component of the multiprotein chromatin-remodeling complexes SWI/SNF: SWI/SNF-A (BAF), SWI/SNF-B (PBAF) and related complexes. The canonical complex contains a catalytic subunit swsn-4, core subunits swsn-1 and swsn-5, and accessory subunits swsn-3, swsn-6, phf-10, dpff-1, swsn-9 and either ham-3/swsn-2.1 or swsn-2.2. May interact with blmp-1. As to expression, broadly expressed in all cell types.

The protein localises to the nucleus. In terms of biological role, involved in transcriptional activation and repression of select genes by chromatin remodeling (alteration of DNA-nucleosome topology). Component of SWI/SNF chromatin remodeling complexes that carry out key enzymatic activities, changing chromatin structure by altering DNA-histone contacts within a nucleosome in an ATP-dependent manner. Required for the blmp-1-mediated transcriptional activation or repression of several hypodermal genes such as bed-3. Involved in regulating differentiation, migration and axon pathfinding of specific serotonergic neurons (HSNs). Probably regulates vulva development through the let-60/Ras pathway. May be involved in regulation of developmental processes in the embryo driven by the Wnt pathway. Involved in gonadogenesis. This chain is SWI/SNF chromatin-remodeling accessory subunit 1, found in Caenorhabditis elegans.